A 157-amino-acid polypeptide reads, in one-letter code: Small ribosomal subunit protein uS7 (157 aa).

Belongs to the universal ribosomal protein uS7 family. Part of the 30S ribosomal subunit. Contacts proteins S9 and S11.

One of the primary rRNA binding proteins, it binds directly to 16S rRNA where it nucleates assembly of the head domain of the 30S subunit. Is located at the subunit interface close to the decoding center, probably blocks exit of the E-site tRNA. The protein is Small ribosomal subunit protein uS7 of Caldicellulosiruptor saccharolyticus (strain ATCC 43494 / DSM 8903 / Tp8T 6331).